The primary structure comprises 425 residues: NAC domain-containing protein 10 (425 aa).

Residues 1 to 10 show a composition bias toward polar residues; the sequence is MESPDSSSGS. The segment at 1–34 is disordered; that stretch reads MESPDSSSGSAPPRVLRRQQQQPGSAPELPPGFR. Over residues 12–23 the composition is skewed to low complexity; sequence PPRVLRRQQQQP. The NAC domain maps to 29–200; that stretch reads LPPGFRFHPT…DWVLCRIYKK (172 aa). A DNA-binding region spans residues 129-206; it reads VGVKKALVFY…IYKKTNKAGA (78 aa).

In terms of tissue distribution, highest expression in stamens. Expressed in leaves.

The protein localises to the nucleus. Its function is as follows. Transcription factor of the NAC family associated with male fertility. Involved in anther development, but not in senescence. Reduced expression of NAC5 via RNAi leads to male-sterility. The protein is NAC domain-containing protein 10 of Oryza sativa subsp. japonica (Rice).